We begin with the raw amino-acid sequence, 553 residues long: ATP synthase subunit alpha (553 aa).

173 to 180 (GDRQTGKT) lines the ATP pocket. The disordered stretch occupies residues 527–553 (EALDPSAVEREEIAVHHRKPSDETAGH). The segment covering 533–553 (AVEREEIAVHHRKPSDETAGH) has biased composition (basic and acidic residues).

The protein belongs to the ATPase alpha/beta chains family. As to quaternary structure, F-type ATPases have 2 components, CF(1) - the catalytic core - and CF(0) - the membrane proton channel. CF(1) has five subunits: alpha(3), beta(3), gamma(1), delta(1), epsilon(1). CF(0) has three main subunits: a(1), b(2) and c(9-12). The alpha and beta chains form an alternating ring which encloses part of the gamma chain. CF(1) is attached to CF(0) by a central stalk formed by the gamma and epsilon chains, while a peripheral stalk is formed by the delta and b chains.

The protein localises to the cell membrane. The enzyme catalyses ATP + H2O + 4 H(+)(in) = ADP + phosphate + 5 H(+)(out). In terms of biological role, produces ATP from ADP in the presence of a proton gradient across the membrane. The alpha chain is a regulatory subunit. This chain is ATP synthase subunit alpha, found in Parafrankia sp. (strain EAN1pec).